Reading from the N-terminus, the 655-residue chain is Protein npp-24 (655 aa).

A helical membrane pass occupies residues 263-283 (ICSVFVLVSGGGVLSHLVVFP).

Its subcellular location is the membrane. In Caenorhabditis elegans, this protein is Protein npp-24.